Reading from the N-terminus, the 77-residue chain is Conotoxin Mr8.2 (77 aa).

The signal sequence occupies residues 1-16; that stretch reads MLRLITAAVLVSACLA. A propeptide spanning residues 17–32 is cleaved from the precursor; the sequence is YPQKKRTPPQTRPTSR.

This sequence belongs to the conotoxin B2 family. Contains 5 disulfide bonds. As to expression, expressed by the venom duct.

The protein localises to the secreted. The polypeptide is Conotoxin Mr8.2 (Conus marmoreus (Marble cone)).